Here is a 295-residue protein sequence, read N- to C-terminus: Acetylglutamate kinase (295 aa).

Residues 61–62 (GG), Arg83, and Asn187 each bind substrate.

The protein belongs to the acetylglutamate kinase family. ArgB subfamily.

It is found in the cytoplasm. The catalysed reaction is N-acetyl-L-glutamate + ATP = N-acetyl-L-glutamyl 5-phosphate + ADP. The protein operates within amino-acid biosynthesis; L-arginine biosynthesis; N(2)-acetyl-L-ornithine from L-glutamate: step 2/4. Functionally, catalyzes the ATP-dependent phosphorylation of N-acetyl-L-glutamate. The polypeptide is Acetylglutamate kinase (Methanocorpusculum labreanum (strain ATCC 43576 / DSM 4855 / Z)).